Reading from the N-terminus, the 1008-residue chain is ATP-dependent zinc metalloprotease FTSH 12, chloroplastic (1008 aa).

The transit peptide at 1 to 49 (MEIAISYKPNPLISSSTQLLKRSKSFGLVRFPAKYGLGATRKKQLFRVY) directs the protein to the chloroplast. 2 consecutive transmembrane segments (helical) span residues 154–174 (AALF…YVAI) and 427–447 (IHYF…LWFI). 533–540 (GPPGTGKT) contributes to the ATP binding site. A Zn(2+)-binding site is contributed by H769. Residue E770 is part of the active site. Positions 773 and 849 each coordinate Zn(2+).

In the N-terminal section; belongs to the AAA ATPase family. It in the C-terminal section; belongs to the peptidase M41 family. Zn(2+) serves as cofactor.

It is found in the plastid. The protein resides in the chloroplast thylakoid membrane. Its function is as follows. Probable ATP-dependent zinc metallopeptidase. This Arabidopsis thaliana (Mouse-ear cress) protein is ATP-dependent zinc metalloprotease FTSH 12, chloroplastic (FTSH12).